The chain runs to 1199 residues: MLDVNNFEYMNIGLASPDKIRSWSFGEVKKPETINYRTLKPEKDGLFCERIFGPTKDWECHCGKYKRVRYKGVVCDRCGVEVTRAKVRRERMGHIELAAPVSHIWYFKGIPSRMGLVLDMSPRALEEVIYFASYVVTDPANTPLEKKQLLSEKEYRAYLDKYGNKFQASMGAEAIHKLLQDIDLVKEVDMLKEELKTSQGQRRTRAIKRLEVLEAFRNSGNKPSWMILDVLPVIPPELRPMVQLDGGRFATSDLNDLYRRVINRNNRLKRLLDLGAPSIIVQNEKRMLQEAVDALIDNGRRGRPVTGPGNRPLKSLSHMLKGKQGRFRQNLLGKRVDYSGRSVIVVGPHLKMYQCGLPKEMALELFKPFVMKELVEKGLAHNIKSAKRKIERVQPEVWDVLESVIKEHPVLLNRAPTLHRLGIQAFEPTLVEGRAIRLHPLVCTAYNADFDGDQMAVHVPLSAEAQAEARILMLAAQNILNPKDGKPVVTPSQDMVLGNYYLTLERAGAVGEGMVFKNTDEALLAYQNGYVHLHTRVAVAANSLKNVTFTEEQRSKLLITTVGKLVFNEILPESFPYMNEPTKSNIEEKTPDRFFLEKGADVKAVIAQQPINAPFKKGILGKIIAEIFKRFHITETSKMLDRMKNLGFKYSTKAGITVGVSDIVVLDDKQEILEEAQSKVDNVMKQFRRGLITEEERYERVISIWSAAKDVIQGKLMKSLDELNPIYMMSDSGARGNASNFTQLAGMRGLMANPAGRIIELPIKSSFREGLTVLEYFISTHGARKGLADTALKTADSGYLTRRLVDVAQDVIIRETDCGTDRGILAKPLKEGTETIERLEERLIGRFARKQVKHPETGEVLVNENELIDEDKALEIVEAGIEEVWIRSAFTCNTPHGVCKRCYGRNLATGSDVEVGEAVGIIAAQSIGEPGTQLTMRTFHTGGVAGDDITQGLPRIQELFEARNPKGQATITEIDGTVVEINEVRDKQQEIVVQGAVETRSYTAPYNSRLKVAEGDKITRGQVLTEGSIDPKELLKVTDLTTVQEYLLHEVQKVYRMQGVEIGDKHVEVMVRQMLRKVRVIDAGDTDVLPGTLLDIHQFTEANKKVLLEGNRPATGRPVLLGITKASLETDSFLSAASFQETTRVLTDAAIKGKRDELLGLKENVIIGKLVPAGTGMMKYRKVKPVSNVQPTDDMVPVE.

Zn(2+)-binding residues include Cys60, Cys62, Cys75, and Cys78. Mg(2+) contacts are provided by Asp449, Asp451, and Asp453. Residues Cys818, Cys892, Cys899, and Cys902 each coordinate Zn(2+).

The protein belongs to the RNA polymerase beta' chain family. RNAP is composed of a core of 2 alpha, a beta and a beta' subunit. The core is associated with a delta subunit, and at least one of epsilon or omega. When a sigma factor is associated with the core the holoenzyme is formed, which can initiate transcription. The cofactor is Mg(2+). It depends on Zn(2+) as a cofactor.

It catalyses the reaction RNA(n) + a ribonucleoside 5'-triphosphate = RNA(n+1) + diphosphate. Functionally, DNA-dependent RNA polymerase catalyzes the transcription of DNA into RNA using the four ribonucleoside triphosphates as substrates. The chain is DNA-directed RNA polymerase subunit beta' from Bacillus subtilis (strain 168).